Reading from the N-terminus, the 117-residue chain is Ribonuclease P protein component (117 aa).

It belongs to the RnpA family. In terms of assembly, consists of a catalytic RNA component (M1 or rnpB) and a protein subunit.

The enzyme catalyses Endonucleolytic cleavage of RNA, removing 5'-extranucleotides from tRNA precursor.. In terms of biological role, RNaseP catalyzes the removal of the 5'-leader sequence from pre-tRNA to produce the mature 5'-terminus. It can also cleave other RNA substrates such as 4.5S RNA. The protein component plays an auxiliary but essential role in vivo by binding to the 5'-leader sequence and broadening the substrate specificity of the ribozyme. This is Ribonuclease P protein component from Nocardioides sp. (strain ATCC BAA-499 / JS614).